Reading from the N-terminus, the 555-residue chain is Glutamine--tRNA ligase (555 aa).

The 'HIGH' region signature appears at 34-44 (PEPNGYLHIGH). Residues 35-37 (EPN) and 41-47 (HIGHAKS) each bind ATP. L-glutamine is bound by residues Asp-67 and Tyr-212. ATP-binding positions include Thr-231, 261 to 262 (RL), and 269 to 271 (MSK). The 'KMSKS' region motif lies at 268–272 (IMSKR).

The protein belongs to the class-I aminoacyl-tRNA synthetase family. In terms of assembly, monomer.

It is found in the cytoplasm. The enzyme catalyses tRNA(Gln) + L-glutamine + ATP = L-glutaminyl-tRNA(Gln) + AMP + diphosphate. This chain is Glutamine--tRNA ligase, found in Yersinia enterocolitica serotype O:8 / biotype 1B (strain NCTC 13174 / 8081).